The primary structure comprises 473 residues: Monocarboxylate transporter 4 (473 aa).

Residues 1–17 (MGAVVVDDGPSGVKAPD) are Cytoplasmic-facing. The helical transmembrane segment at 18–38 (GGWGWAVLFGCFIITGFSYAF) threads the bilayer. Over 39–61 (PKAVSVFFKELIREFGVGYSDTA) the chain is Extracellular. Residues 62–82 (WISSILLAMLYGTGPLCSVCV) traverse the membrane as a helical segment. The Cytoplasmic segment spans residues 83–91 (NRFGCRPVM). Residues 92–112 (LVGGLFASMGMVIASFCTSIV) traverse the membrane as a helical segment. The Extracellular portion of the chain corresponds to 113-115 (QIY). Residues 116–136 (LTAGVITGLGLALNFQPSLIM) form a helical membrane-spanning segment. Residues 137–149 (LNRYFDKRRPLAN) are Cytoplasmic-facing. Residues 150-170 (GLSAAGSPVFLCALSPLGQIL) traverse the membrane as a helical segment. Residues 171 to 179 (QHEYGWRGG) are Extracellular-facing. A helical membrane pass occupies residues 180–200 (FLILGGMLLNCCVCGALMRPL). Topologically, residues 201–231 (EPPKKSEATKEPAEKKAKKKLLDFSVFKDGG) are cytoplasmic. The chain crosses the membrane as a helical span at residues 232–252 (FVIYTLAASIMVLGLFVPPVF). The Extracellular portion of the chain corresponds to 253 to 268 (VVSYAKDLGYQDTKAA). A helical transmembrane segment spans residues 269 to 289 (FLLTILGFIDIFARPICGMVA). Topologically, residues 290-297 (GLKWVRPR) are cytoplasmic. The helical transmembrane segment at 298–318 (CVYLFSFAMIFNGFTDLMGSM) threads the bilayer. Residues 319-321 (SVD) are Extracellular-facing. The helical transmembrane segment at 322-342 (YGGLVVFCIFFGISYGMVGAL) threads the bilayer. Over 343–358 (QFEVLMAIVGTQKFSS) the chain is Cytoplasmic. The helical transmembrane segment at 359–379 (AIGLVLLAEAMAVLIGPPSAG) threads the bilayer. Residues 380–388 (KLLDLTRRY) are Extracellular-facing. Residues 389–409 (MFVFIIAGIEVTTSALVLALG) traverse the membrane as a helical segment. Residues 410-473 (NFFCIKKKPA…EVVTNPETCV (64 aa)) are Cytoplasmic-facing. Positions 421–447 (PHTKEAAAEREELNKSEDKTPEDAKVD) are disordered. Basolateral sorting signal stretches follow at residues 427–449 (AAEREELNKSEDKTPEDAKVDSI) and 449–473 (IEVEQFLKDEPEKNGEVVTNPETCV).

The protein belongs to the major facilitator superfamily. Monocarboxylate porter (TC 2.A.1.13) family. As to quaternary structure, interacts with BSG; interaction mediates SLC16A3 targeting to the plasma membrane.

It localises to the cell membrane. The protein localises to the basolateral cell membrane. The enzyme catalyses (S)-lactate(in) + H(+)(in) = (S)-lactate(out) + H(+)(out). The catalysed reaction is pyruvate(out) + H(+)(out) = pyruvate(in) + H(+)(in). Functionally, proton-dependent transporter of monocarboxylates such as L-lactate and pyruvate. Plays a predominant role in the L-lactate efflux from highly glycolytic cells. The polypeptide is Monocarboxylate transporter 4 (SLC16A3) (Gallus gallus (Chicken)).